The sequence spans 332 residues: 2,3-diketo-L-gulonate reductase (332 aa).

The active-site Proton donor is the His-44. Residues 168 to 174, 224 to 225, and 304 to 306 contribute to the NAD(+) site; these read ITMVDMS, WK, and GHE.

The protein belongs to the LDH2/MDH2 oxidoreductase family. DlgD subfamily. Homodimer.

It is found in the cytoplasm. The catalysed reaction is 3-dehydro-L-gulonate + NAD(+) = 2,3-dioxo-L-gulonate + NADH + H(+). It catalyses the reaction 3-dehydro-L-gulonate + NADP(+) = 2,3-dioxo-L-gulonate + NADPH + H(+). Catalyzes the reduction of 2,3-diketo-L-gulonate in the presence of NADH, to form 3-keto-L-gulonate. The sequence is that of 2,3-diketo-L-gulonate reductase from Salmonella typhimurium (strain LT2 / SGSC1412 / ATCC 700720).